We begin with the raw amino-acid sequence, 339 residues long: tRNA N6-adenosine threonylcarbamoyltransferase (339 aa).

Fe cation is bound by residues His-114 and His-118. Substrate-binding positions include 137–141 (VVSGG), Asp-170, Gly-183, Asp-187, and Asn-277. Position 305 (Asp-305) interacts with Fe cation.

This sequence belongs to the KAE1 / TsaD family. Requires Fe(2+) as cofactor.

Its subcellular location is the cytoplasm. The catalysed reaction is L-threonylcarbamoyladenylate + adenosine(37) in tRNA = N(6)-L-threonylcarbamoyladenosine(37) in tRNA + AMP + H(+). Functionally, required for the formation of a threonylcarbamoyl group on adenosine at position 37 (t(6)A37) in tRNAs that read codons beginning with adenine. Is involved in the transfer of the threonylcarbamoyl moiety of threonylcarbamoyl-AMP (TC-AMP) to the N6 group of A37, together with TsaE and TsaB. TsaD likely plays a direct catalytic role in this reaction. This Clostridium perfringens (strain SM101 / Type A) protein is tRNA N6-adenosine threonylcarbamoyltransferase.